We begin with the raw amino-acid sequence, 384 residues long: uncharacterized protein (384 aa).

A run of 12 helical transmembrane segments spans residues 22–42, 52–72, 81–101, 106–126, 143–163, 164–184, 202–222, 240–260, 276–296, 299–319, 327–347, and 352–372; these read LAFF…PFAK, LGLL…LTGV, AVIL…VLMN, MAIA…AMNI, FHGL…ALLW, LGLN…ILLL, LFVF…VMFL, GMSP…MTLG, VLLG…SIDS, AAII…PILF, VMPA…GILA, and IGFI…ALLL.

This sequence belongs to the major facilitator superfamily.

It is found in the membrane. This is an uncharacterized protein from Yersinia pestis.